A 310-amino-acid chain; its full sequence is Putative olfactory receptor 7A2 (310 aa).

Topologically, residues 1-26 are extracellular; that stretch reads MVKAGNETQISEFLLLGFSEKQELQP. Asn-6 is a glycosylation site (N-linked (GlcNAc...) asparagine). Residues 27–47 form a helical membrane-spanning segment; that stretch reads FLFGLFLSMYLVTVLGNLLII. Topologically, residues 48–55 are cytoplasmic; it reads LAAISDSC. The chain crosses the membrane as a helical span at residues 56 to 76; sequence LHTPMYFFLSNLSFVDICFAS. Over 77 to 100 the chain is Extracellular; the sequence is TMVPKMLVNIQTQSKVITYAGCIT. The cysteines at positions 98 and 190 are disulfide-linked. The chain crosses the membrane as a helical span at residues 101 to 121; it reads QMCFFVLFIVLDSLLLTVMAY. Residues 122–140 are Cytoplasmic-facing; sequence DQFVAICHPLHYTVIMSPQ. The chain crosses the membrane as a helical span at residues 141–161; sequence LCGLLVLVSWIMSVLNSMLQS. Over 162-198 the chain is Extracellular; that stretch reads LVTLQLSFCTDLEIPHFFCELNEMIHLACSDTFVNNM. Residues 199–218 traverse the membrane as a helical segment; that stretch reads VMHFAAVLLDGGPLVGILYS. The Cytoplasmic portion of the chain corresponds to 219–238; sequence YCRIVSSIRAISSTQGKYKA. Residues 239–259 traverse the membrane as a helical segment; sequence LSTCASHLSVVSIFYGTGLGV. Residues 260–272 are Extracellular-facing; the sequence is YLSSTMTQNLHST. The chain crosses the membrane as a helical span at residues 273–293; it reads AVASVMYTVVTPMLNPFIYSL. The Cytoplasmic portion of the chain corresponds to 294-310; that stretch reads RNKDIKGALTQFFRGKQ.

It belongs to the G-protein coupled receptor 1 family.

The protein resides in the cell membrane. Functionally, odorant receptor. The polypeptide is Putative olfactory receptor 7A2 (OR7A2P) (Homo sapiens (Human)).